Consider the following 287-residue polypeptide: uncharacterized protein (287 aa).

Residues 133-239 form the THUMP domain; sequence CEVGKTKKMT…KNIIGISIVQ (107 aa). The tract at residues 257–287 is disordered; the sequence is ENTKSIPNDSKLDNFDRDKNQIINDKAEHAE. The segment covering 266-287 has biased composition (basic and acidic residues); it reads SKLDNFDRDKNQIINDKAEHAE.

This is an uncharacterized protein from Schizosaccharomyces pombe (strain 972 / ATCC 24843) (Fission yeast).